Reading from the N-terminus, the 321-residue chain is uncharacterized protein (321 aa).

9 helical membrane passes run 12–32 (IGVE…WAAT), 52–72 (LITS…AFLV), 86–106 (ILMS…ILII), 109–129 (LTGL…QQWF), 136–156 (FVIS…LVLA), 168–188 (DSLS…LFVG), 214–234 (WGMI…FTFL), 254–274 (KEIP…GLFF), and 292–312 (IFIC…QIFA).

It localises to the cell membrane. This is an uncharacterized protein from Campylobacter jejuni subsp. jejuni serotype O:2 (strain ATCC 700819 / NCTC 11168).